A 174-amino-acid polypeptide reads, in one-letter code: Large ribosomal subunit protein uL15 (174 aa).

Disordered regions lie at residues 1–56 (MKLH…GQMR) and 150–174 (VERR…TPGA). Residues 21-35 (RGIGSGKGKTGGKGM) show a composition bias toward gly residues.

The protein belongs to the universal ribosomal protein uL15 family. Part of the 50S ribosomal subunit.

Its function is as follows. Binds to the 23S rRNA. This chain is Large ribosomal subunit protein uL15, found in Roseiflexus castenholzii (strain DSM 13941 / HLO8).